A 37-amino-acid polypeptide reads, in one-letter code: Cytochrome b6-f complex subunit 5 (37 aa).

A helical transmembrane segment spans residues 5–25 (LLCGIVLGLIPITLAGLFVAA).

It belongs to the PetG family. The 4 large subunits of the cytochrome b6-f complex are cytochrome b6, subunit IV (17 kDa polypeptide, PetD), cytochrome f and the Rieske protein, while the 4 small subunits are PetG, PetL, PetM and PetN. The complex functions as a dimer.

The protein localises to the cellular thylakoid membrane. Its function is as follows. Component of the cytochrome b6-f complex, which mediates electron transfer between photosystem II (PSII) and photosystem I (PSI), cyclic electron flow around PSI, and state transitions. PetG is required for either the stability or assembly of the cytochrome b6-f complex. The polypeptide is Cytochrome b6-f complex subunit 5 (Cyanothece sp. (strain PCC 7425 / ATCC 29141)).